The primary structure comprises 534 residues: NAD(P)H-quinone oxidoreductase chain 4 (534 aa).

14 helical membrane-spanning segments follow: residues F12–F32, F44–F64, I94–W114, P120–V140, L144–W164, F176–F196, I220–H240, T251–L271, F285–F305, I314–S334, A340–A360, F384–V404, V425–M445, and V472–V492.

This sequence belongs to the complex I subunit 4 family.

The protein localises to the cellular thylakoid membrane. It catalyses the reaction a plastoquinone + NADH + (n+1) H(+)(in) = a plastoquinol + NAD(+) + n H(+)(out). The catalysed reaction is a plastoquinone + NADPH + (n+1) H(+)(in) = a plastoquinol + NADP(+) + n H(+)(out). Its function is as follows. NDH-1 shuttles electrons from NAD(P)H, via FMN and iron-sulfur (Fe-S) centers, to quinones in the respiratory chain. The immediate electron acceptor for the enzyme in this species is believed to be plastoquinone. Couples the redox reaction to proton translocation (for every two electrons transferred, four hydrogen ions are translocated across the cytoplasmic membrane), and thus conserves the redox energy in a proton gradient. This chain is NAD(P)H-quinone oxidoreductase chain 4, found in Prochlorococcus marinus (strain MIT 9312).